Consider the following 293-residue polypeptide: Ribosomal RNA small subunit methyltransferase H (293 aa).

Residues 32–34 (GGH), D51, F78, D99, and Q106 contribute to the S-adenosyl-L-methionine site. The segment at 274 to 293 (DEIRENPASRSAKMRVARRL) is disordered.

The protein belongs to the methyltransferase superfamily. RsmH family.

Its subcellular location is the cytoplasm. It carries out the reaction cytidine(1402) in 16S rRNA + S-adenosyl-L-methionine = N(4)-methylcytidine(1402) in 16S rRNA + S-adenosyl-L-homocysteine + H(+). In terms of biological role, specifically methylates the N4 position of cytidine in position 1402 (C1402) of 16S rRNA. The chain is Ribosomal RNA small subunit methyltransferase H from Sulfurihydrogenibium azorense (strain DSM 15241 / OCM 825 / Az-Fu1).